Consider the following 128-residue polypeptide: Transcription antitermination protein NusB (128 aa).

The protein belongs to the NusB family.

Its function is as follows. Involved in transcription antitermination. Required for transcription of ribosomal RNA (rRNA) genes. Binds specifically to the boxA antiterminator sequence of the ribosomal RNA (rrn) operons. This chain is Transcription antitermination protein NusB, found in Listeria monocytogenes serotype 4a (strain HCC23).